The following is a 657-amino-acid chain: 1-deoxy-D-xylulose-5-phosphate synthase (657 aa).

Thiamine diphosphate is bound by residues histidine 73 and 113 to 115 (SHA). Residue aspartate 145 coordinates Mg(2+). Residues 146–147 (GA), asparagine 175, tyrosine 293, and glutamate 375 contribute to the thiamine diphosphate site. Asparagine 175 is a binding site for Mg(2+).

It belongs to the transketolase family. DXPS subfamily. In terms of assembly, homodimer. Requires Mg(2+) as cofactor. The cofactor is thiamine diphosphate.

It catalyses the reaction D-glyceraldehyde 3-phosphate + pyruvate + H(+) = 1-deoxy-D-xylulose 5-phosphate + CO2. Its pathway is metabolic intermediate biosynthesis; 1-deoxy-D-xylulose 5-phosphate biosynthesis; 1-deoxy-D-xylulose 5-phosphate from D-glyceraldehyde 3-phosphate and pyruvate: step 1/1. In terms of biological role, catalyzes the acyloin condensation reaction between C atoms 2 and 3 of pyruvate and glyceraldehyde 3-phosphate to yield 1-deoxy-D-xylulose-5-phosphate (DXP). The sequence is that of 1-deoxy-D-xylulose-5-phosphate synthase from Renibacterium salmoninarum (strain ATCC 33209 / DSM 20767 / JCM 11484 / NBRC 15589 / NCIMB 2235).